A 33-amino-acid polypeptide reads, in one-letter code: uncharacterized protein (33 aa).

The Cytoplasmic segment spans residues 1–12 (MKENKVQQISHK). Residues 13-33 (LINIVVFVAIVEYAYLFLHFY) form a helical membrane-spanning segment.

It is found in the cell inner membrane. This is an uncharacterized protein from Escherichia coli (strain K12).